We begin with the raw amino-acid sequence, 316 residues long: protein SLOW GREEN 1, chloroplastic (316 aa).

A chloroplast-targeting transit peptide spans 1 to 39; sequence MISSLSASSSLVSSFVAVKATPVTGPLIPRRDLLSIRIR. 4 TPR repeats span residues 118-151, 152-185, 226-259, and 261-293; these read VETL…QPEE, TEWK…NPLS, RDVR…DPKD, and RPYF…SPKK.

In terms of tissue distribution, ubiquitous. Preferentially expressed in newly formed green tissues.

It is found in the plastid. The protein resides in the chloroplast. In terms of biological role, required for the early stage of chloroplast development. May be involved in chloroplast protein biosynthesis and/or degradation. The polypeptide is protein SLOW GREEN 1, chloroplastic (Arabidopsis thaliana (Mouse-ear cress)).